The following is a 1146-amino-acid chain: Sodium/hydrogen exchanger 7 (1146 aa).

The Extracellular portion of the chain corresponds to 1–28 (MTTVIDATMAYRFLEEATDSSSSSSSSK). A helical membrane pass occupies residues 29 to 49 (LESSPVDAVLFVGMSLVLGIA). Residues 50–58 (SRHLLRGTR) lie on the Cytoplasmic side of the membrane. The helical transmembrane segment at 59 to 79 (VPYTVALLVIGIALGSLEYGA) threads the bilayer. At 80–99 (KHNLGKIGHGIRIWNEIDPE) the chain is on the extracellular side. Residues 100-120 (LLLAVFLPALLFESSFSMEVH) traverse the membrane as a helical segment. The Cytoplasmic portion of the chain corresponds to 121–127 (QIKRCLG). The chain crosses the membrane as a helical span at residues 128–148 (QMVLLAVPGVLISTACLGSLV). Topologically, residues 149-159 (KVTFPYEWDWK) are extracellular. A helical transmembrane segment spans residues 160 to 180 (TSLLLGGLLSATDPVAVVALL). Topologically, residues 181–191 (KELGASKKLST) are cytoplasmic. A helical transmembrane segment spans residues 192–212 (IIEGESLMNDGTAIVVFQLFL). The Extracellular segment spans residues 213–227 (KMAMGQNSDWSSIIK). Residues 228–250 (FLLKVALGAVGIGLAFGIASVIW) form a helical membrane-spanning segment. The Cytoplasmic segment spans residues 251-253 (LKF). The helical transmembrane segment at 254-273 (IFNDTVIEITLTIAVSYFAY) threads the bilayer. The Extracellular portion of the chain corresponds to 274–278 (YTAQE). The chain crosses the membrane as a helical span at residues 279–299 (WAGASGVLTVMTLGMFYAAFA). Residues 300 to 313 (RTAFKGDSQKSLHH) are Cytoplasmic-facing. Residues 314–334 (FWEMVAYIANTLIFILSGVVI) form a helical membrane-spanning segment. Over 335–352 (AEGILDSDKIAYQGNSWR) the chain is Extracellular. A helical membrane pass occupies residues 353–373 (FLFLLYVYIQLSRVVVVGVLY). The Cytoplasmic segment spans residues 374–387 (PLLCRFGYGLDWKE). The helical transmembrane segment at 388–408 (SIILVWSGLRGAVALALSLSV) threads the bilayer. Residues 409–420 (KQSSGNSHISKE) lie on the Extracellular side of the membrane. Residues 421 to 441 (TGTLFLFFTGGIVFLTLIVNG) form a helical membrane-spanning segment. Residues 442-1146 (STTQFVLRLL…PSKIVFRNDL (705 aa)) are Cytoplasmic-facing. Disordered regions lie at residues 981-1001 (LHRR…QLQR) and 1102-1128 (CQLP…DEDE). Positions 986-996 (SSLTPPRSSSS) are enriched in low complexity. The segment covering 1109–1118 (ESSTRQNTMV) has biased composition (polar residues).

The protein belongs to the monovalent cation:proton antiporter 1 (CPA1) transporter (TC 2.A.36) family. As to quaternary structure, interacts with CIPK24/SOS2 and CBL4/SOS3. Phosphorylated by CIPK24/SOS2 in complex with CBL4/SOS3. More expressed in roots than in shoots. Mostly localized in parenchyma cells at the xylem/symplast boundary in roots, hypocotyls, stems and leaves. Also present in root tips epidermal cells.

The protein localises to the cell membrane. It carries out the reaction Na(+)(in) + H(+)(out) = Na(+)(out) + H(+)(in). It catalyses the reaction K(+)(in) + H(+)(out) = K(+)(out) + H(+)(in). In terms of biological role, acts in electroneutral exchange of protons for cations such as Na(+) or Li(+) across plasma membrane. Involved in Na(+) and K(+) homeostasis. Required for cytoplasmic Na(+) and Li(+) detoxification by secreting them from the cytoplasm to the extracellular space. Regulates Na(+) content of the xylem sap. The chain is Sodium/hydrogen exchanger 7 (NHX7) from Arabidopsis thaliana (Mouse-ear cress).